The chain runs to 410 residues: MSGAEEAGGGGPAAGPAGSVPAGVGVGAGAGAGVGVGAGPGAAAGPAAAAALGEAAGPGLPDEAGLAGARQLQEAAGDPDAPPKKRLRAAEAAEAAAAAAAAGSGKLEERLYSVLCCTVCLDLPKASVYQCTNGHLMCAGCFIHLLADARLKEEQATCPNCRCEISKSLCCRNLAVEKAVSELPSECGFCLCQFPRSILERHQKEECQDRVTQCKYKRIGCPWHGPFHELTVHEAACAHPTKTGNELMEILDEMDQSHRKEMQLYNSIFSLLSFEKIGYTEVQFRPYRTDDFITRLYYETPRFTVLNQTWVLKARVNDSERNPNLSCKRTLSFQLLLKSKVTAPLECSFLLLKGPYDDVKISPVIYHFVFTNESNETDYVPLPIVDSVECNKLLAAKNINLRLFLFQIQK.

The segment covering 1 to 13 has biased composition (gly residues); the sequence is MSGAEEAGGGGPA. The tract at residues 1–22 is disordered; sequence MSGAEEAGGGGPAAGPAGSVPA. Residues 117 to 162 form an RING-type; degenerate zinc finger; it reads CTVCLDLPKASVYQCTNGHLMCAGCFIHLLADARLKEEQATCPNCR. The TRAF-type zinc finger occupies 158–231; that stretch reads CPNCRCEISK…PWHGPFHELT (74 aa).

The protein belongs to the ZFTRAF1 family. In terms of assembly, interacts with LGALS3.

The protein resides in the cytoplasm. The protein localises to the perinuclear region. In Bos taurus (Bovine), this protein is Zinc finger TRAF-type-containing protein 1.